Consider the following 263-residue polypeptide: 4-hydroxy-tetrahydrodipicolinate reductase (263 aa).

10-15 (GASGKM) is a binding site for NAD(+). NADP(+) is bound at residue arginine 38. Residues 97-99 (GTT) and 123-126 (APNF) contribute to the NAD(+) site. Catalysis depends on histidine 153, which acts as the Proton donor/acceptor. (S)-2,3,4,5-tetrahydrodipicolinate is bound at residue histidine 154. Residue lysine 157 is the Proton donor of the active site. 163-164 (GT) is a binding site for (S)-2,3,4,5-tetrahydrodipicolinate.

This sequence belongs to the DapB family.

It is found in the cytoplasm. It carries out the reaction (S)-2,3,4,5-tetrahydrodipicolinate + NAD(+) + H2O = (2S,4S)-4-hydroxy-2,3,4,5-tetrahydrodipicolinate + NADH + H(+). The catalysed reaction is (S)-2,3,4,5-tetrahydrodipicolinate + NADP(+) + H2O = (2S,4S)-4-hydroxy-2,3,4,5-tetrahydrodipicolinate + NADPH + H(+). It participates in amino-acid biosynthesis; L-lysine biosynthesis via DAP pathway; (S)-tetrahydrodipicolinate from L-aspartate: step 4/4. Catalyzes the conversion of 4-hydroxy-tetrahydrodipicolinate (HTPA) to tetrahydrodipicolinate. This is 4-hydroxy-tetrahydrodipicolinate reductase from Dehalococcoides mccartyi (strain ATCC BAA-2100 / JCM 16839 / KCTC 5957 / BAV1).